A 187-amino-acid chain; its full sequence is UPF0301 protein HSM_1900 (187 aa).

It belongs to the UPF0301 (AlgH) family.

This Histophilus somni (strain 2336) (Haemophilus somnus) protein is UPF0301 protein HSM_1900.